Reading from the N-terminus, the 570-residue chain is PTS system lactose-specific EIICB component (570 aa).

Residues I9–F410 form the PTS EIIC type-3 domain. 9 helical membrane passes run G31–V51, A65–T85, I104–P124, A133–V153, F178–I198, G223–H243, M283–W303, V340–V360, and I382–V402. In terms of domain architecture, PTS EIIB type-3 spans Q467–N570. The active-site Phosphocysteine intermediate; for EIIB activity is C474. C474 carries the phosphocysteine; by EIIA modification.

The protein localises to the cell membrane. It catalyses the reaction lactose(out) + N(pros)-phospho-L-histidyl-[protein] = lactose 6-phosphate(in) + L-histidyl-[protein]. The phosphoenolpyruvate-dependent sugar phosphotransferase system (sugar PTS), a major carbohydrate active transport system, catalyzes the phosphorylation of incoming sugar substrates concomitantly with their translocation across the cell membrane. The enzyme II LacEF PTS system is involved in lactose transport. This chain is PTS system lactose-specific EIICB component, found in Staphylococcus aureus (strain MSSA476).